A 267-amino-acid polypeptide reads, in one-letter code: Dihydropteroate synthase (267 aa).

One can recognise a Pterin-binding domain in the interval 1-251; that stretch reads MTKTKIMGIL…NVELNAKLAK (251 aa). A Mg(2+)-binding site is contributed by asparagine 11. (7,8-dihydropterin-6-yl)methyl diphosphate is bound by residues threonine 51, aspartate 84, asparagine 103, aspartate 167, lysine 203, and 239–241; that span reads RVH.

It belongs to the DHPS family. As to quaternary structure, homodimer. The cofactor is Mg(2+).

It carries out the reaction (7,8-dihydropterin-6-yl)methyl diphosphate + 4-aminobenzoate = 7,8-dihydropteroate + diphosphate. The protein operates within cofactor biosynthesis; tetrahydrofolate biosynthesis; 7,8-dihydrofolate from 2-amino-4-hydroxy-6-hydroxymethyl-7,8-dihydropteridine diphosphate and 4-aminobenzoate: step 1/2. Functionally, catalyzes the condensation of para-aminobenzoate (pABA) with 6-hydroxymethyl-7,8-dihydropterin diphosphate (DHPt-PP) to form 7,8-dihydropteroate (H2Pte), the immediate precursor of folate derivatives. The polypeptide is Dihydropteroate synthase (folP) (Staphylococcus aureus (strain Mu50 / ATCC 700699)).